The chain runs to 309 residues: tRNA dimethylallyltransferase (309 aa).

10 to 17 (GPTAVGKT) contacts ATP. A substrate-binding site is contributed by 12–17 (TAVGKT). The interaction with substrate tRNA stretch occupies residues 35 to 38 (DSMQ).

The protein belongs to the IPP transferase family. In terms of assembly, monomer. It depends on Mg(2+) as a cofactor.

The enzyme catalyses adenosine(37) in tRNA + dimethylallyl diphosphate = N(6)-dimethylallyladenosine(37) in tRNA + diphosphate. Its function is as follows. Catalyzes the transfer of a dimethylallyl group onto the adenine at position 37 in tRNAs that read codons beginning with uridine, leading to the formation of N6-(dimethylallyl)adenosine (i(6)A). This Clostridium botulinum (strain Alaska E43 / Type E3) protein is tRNA dimethylallyltransferase.